We begin with the raw amino-acid sequence, 218 residues long: N-(5'-phosphoribosyl)anthranilate isomerase (218 aa).

Belongs to the TrpF family.

The enzyme catalyses N-(5-phospho-beta-D-ribosyl)anthranilate = 1-(2-carboxyphenylamino)-1-deoxy-D-ribulose 5-phosphate. Its pathway is amino-acid biosynthesis; L-tryptophan biosynthesis; L-tryptophan from chorismate: step 3/5. The sequence is that of N-(5'-phosphoribosyl)anthranilate isomerase from Chelativorans sp. (strain BNC1).